The primary structure comprises 93 residues: UPF0358 protein lmo1070 (93 aa).

The protein belongs to the UPF0358 family.

The sequence is that of UPF0358 protein lmo1070 from Listeria monocytogenes serovar 1/2a (strain ATCC BAA-679 / EGD-e).